We begin with the raw amino-acid sequence, 369 residues long: 5-amino-6-(D-ribitylamino)uracil--L-tyrosine 4-hydroxyphenyl transferase (369 aa).

In terms of domain architecture, Radical SAM core spans 56–292 (VTFVVNRNIN…AVARLYFGPL (237 aa)). 3 residues coordinate [4Fe-4S] cluster: cysteine 70, cysteine 74, and cysteine 77.

This sequence belongs to the radical SAM superfamily. CofH family. As to quaternary structure, consists of two subunits, CofG and CofH. [4Fe-4S] cluster serves as cofactor.

The enzyme catalyses 5-amino-6-(D-ribitylamino)uracil + L-tyrosine + S-adenosyl-L-methionine = 5-amino-5-(4-hydroxybenzyl)-6-(D-ribitylimino)-5,6-dihydrouracil + 2-iminoacetate + 5'-deoxyadenosine + L-methionine + H(+). It participates in cofactor biosynthesis; coenzyme F0 biosynthesis. Catalyzes the radical-mediated synthesis of 5-amino-5-(4-hydroxybenzyl)-6-(D-ribitylimino)-5,6-dihydrouracil from 5-amino-6-(D-ribitylamino)uracil and L-tyrosine. The chain is 5-amino-6-(D-ribitylamino)uracil--L-tyrosine 4-hydroxyphenyl transferase from Methanopyrus kandleri (strain AV19 / DSM 6324 / JCM 9639 / NBRC 100938).